The primary structure comprises 240 residues: MADS-box protein SVP (240 aa).

Residues 3–57 (REKIQIRKIDNATARQVTFSKRRRGLFKKAEELSVLCDADVALIIFSSTGKLFEF) enclose the MADS-box domain. Positions 87–180 (QLVENSDHAR…GTQLTEENER (94 aa)) constitute a K-box domain. The interval 202 to 240 (VYEEGQSSESITNAGNSTGAPVDSESSDTSLRLGLPYGG) is disordered. Residues 206–220 (GQSSESITNAGNSTG) are compositionally biased toward polar residues.

In terms of assembly, forms a heterodimer with AP1 and SVP. Interacts with the SEU-LUG corepressor complex when complexed to AP1. Interacts with AGL15. Interacts with AGL16. Detected in roots and leaves. Expressed at very low levels in flowers and siliques. Present in floral meristems.

It localises to the nucleus. Its function is as follows. Transcription repressor that inhibit floral transition in the autonomous flowering pathway, independent of photoperiod and temperature. Acts in a dosage-dependent manner. Together with AGL24 and AP1, controls the identity of the floral meristem and regulates expression of class B, C and E genes. Promotes EFM expression to suppress flowering. In Arabidopsis thaliana (Mouse-ear cress), this protein is MADS-box protein SVP.